Here is a 90-residue protein sequence, read N- to C-terminus: Defensin-like protein 193 (90 aa).

A signal peptide spans Met1–Ala27. Disulfide bonds link Cys32–Cys86, Cys45–Cys69, Cys54–Cys81, and Cys58–Cys83.

Belongs to the DEFL family. Protease inhibitor I18 (RTI/MTI-2) subfamily.

The protein localises to the secreted. This chain is Defensin-like protein 193 (ATTI2), found in Arabidopsis thaliana (Mouse-ear cress).